The chain runs to 236 residues: Ubiquitin carboxyl-terminal hydrolase YUH1 (236 aa).

Residues 7–233 (AVVPIESNPE…LNFAMLGLGP (227 aa)) enclose the UCH catalytic domain. Residues 10 to 15 (PIESNP) form an interaction with ubiquitin region. Cys-90 serves as the catalytic Nucleophile. The interaction with ubiquitin stretch occupies residues 149–157 (FSTGQSEAP). His-166 acts as the Proton donor in catalysis. The interaction with ubiquitin stretch occupies residues 219–228 (NEEDVLNFAM).

It belongs to the peptidase C12 family.

The catalysed reaction is Thiol-dependent hydrolysis of ester, thioester, amide, peptide and isopeptide bonds formed by the C-terminal Gly of ubiquitin (a 76-residue protein attached to proteins as an intracellular targeting signal).. Functionally, deubiquitinating enzyme (DUB) that controls levels of cellular ubiquitin through processing of ubiquitin precursors and ubiquitinated proteins. Thiol protease that recognizes and hydrolyzes a peptide bond at the C-terminal glycine of either ubiquitin or RUB1. Preferentially cleaves ubiquitin from peptides and small adducts. This chain is Ubiquitin carboxyl-terminal hydrolase YUH1 (YUH1), found in Saccharomyces cerevisiae (strain ATCC 204508 / S288c) (Baker's yeast).